The sequence spans 130 residues: Ribonuclease P protein component 2 (130 aa).

This sequence belongs to the eukaryotic/archaeal RNase P protein component 2 family. In terms of assembly, consists of a catalytic RNA component and at least 4-5 protein subunits.

It localises to the cytoplasm. The catalysed reaction is Endonucleolytic cleavage of RNA, removing 5'-extranucleotides from tRNA precursor.. In terms of biological role, part of ribonuclease P, a protein complex that generates mature tRNA molecules by cleaving their 5'-ends. The sequence is that of Ribonuclease P protein component 2 from Methanococcus maripaludis (strain C5 / ATCC BAA-1333).